The chain runs to 286 residues: MLSKALNINGETGLLAVIGDPVSHSLSPKMHNLALRHCQLNYCYVALPVKPHNLVRAVQGFAAMGMRGFNATIPHKENLLPLMHTLSEEASHIGAVNTVVIDDDGKMTGHNTDAYGFITGLKEAWRSDLSGLTAIMLGSGGAARAILYGLIQAKAARVIIANRTIERAQALIEAMQPYAPNTQLMVAPTQADQLPLESCDLLINTTSMGLKGETIPYIDLARLPHHAFVSDIVYGAHPTPLLRATAQHQLGGQDGLPMLIHQGAKAFELWTGHSMPVELVEHTLRQ.

Shikimate is bound by residues 25–27 (SLS) and threonine 72. Catalysis depends on lysine 76, which acts as the Proton acceptor. Glutamate 88 contributes to the NADP(+) binding site. 2 residues coordinate shikimate: asparagine 97 and aspartate 113. Residues 138 to 142 (GSGGA), 162 to 167 (NRTIER), and isoleucine 232 contribute to the NADP(+) site. Tyrosine 234 provides a ligand contact to shikimate. Glycine 255 contacts NADP(+).

The protein belongs to the shikimate dehydrogenase family. As to quaternary structure, homodimer.

It catalyses the reaction shikimate + NADP(+) = 3-dehydroshikimate + NADPH + H(+). It functions in the pathway metabolic intermediate biosynthesis; chorismate biosynthesis; chorismate from D-erythrose 4-phosphate and phosphoenolpyruvate: step 4/7. In terms of biological role, involved in the biosynthesis of the chorismate, which leads to the biosynthesis of aromatic amino acids. Catalyzes the reversible NADPH linked reduction of 3-dehydroshikimate (DHSA) to yield shikimate (SA). The sequence is that of Shikimate dehydrogenase (NADP(+)) from Magnetococcus marinus (strain ATCC BAA-1437 / JCM 17883 / MC-1).